Reading from the N-terminus, the 72-residue chain is Translation initiation factor IF-1 (72 aa).

The S1-like domain occupies 1–72 (MAKDDVIQMQ…SRARIVFRAK (72 aa)).

This sequence belongs to the IF-1 family. In terms of assembly, component of the 30S ribosomal translation pre-initiation complex which assembles on the 30S ribosome in the order IF-2 and IF-3, IF-1 and N-formylmethionyl-tRNA(fMet); mRNA recruitment can occur at any time during PIC assembly.

It is found in the cytoplasm. Its function is as follows. One of the essential components for the initiation of protein synthesis. Stabilizes the binding of IF-2 and IF-3 on the 30S subunit to which N-formylmethionyl-tRNA(fMet) subsequently binds. Helps modulate mRNA selection, yielding the 30S pre-initiation complex (PIC). Upon addition of the 50S ribosomal subunit IF-1, IF-2 and IF-3 are released leaving the mature 70S translation initiation complex. The sequence is that of Translation initiation factor IF-1 from Burkholderia mallei (strain NCTC 10247).